An 876-amino-acid chain; its full sequence is Alanine--tRNA ligase (876 aa).

Positions 564, 568, 666, and 670 each coordinate Zn(2+).

The protein belongs to the class-II aminoacyl-tRNA synthetase family. In terms of assembly, homotetramer. It depends on Zn(2+) as a cofactor.

The protein localises to the cytoplasm. It carries out the reaction tRNA(Ala) + L-alanine + ATP = L-alanyl-tRNA(Ala) + AMP + diphosphate. Its function is as follows. Catalyzes the attachment of alanine to tRNA(Ala) in a two-step reaction: alanine is first activated by ATP to form Ala-AMP and then transferred to the acceptor end of tRNA(Ala). Also edits incorrectly charged Ser-tRNA(Ala) and Gly-tRNA(Ala) via its editing domain. This chain is Alanine--tRNA ligase, found in Salmonella typhimurium (strain LT2 / SGSC1412 / ATCC 700720).